Here is a 336-residue protein sequence, read N- to C-terminus: Phenylalanine--tRNA ligase alpha subunit (336 aa).

E257 lines the Mg(2+) pocket.

The protein belongs to the class-II aminoacyl-tRNA synthetase family. Phe-tRNA synthetase alpha subunit type 1 subfamily. In terms of assembly, tetramer of two alpha and two beta subunits. It depends on Mg(2+) as a cofactor.

It localises to the cytoplasm. The enzyme catalyses tRNA(Phe) + L-phenylalanine + ATP = L-phenylalanyl-tRNA(Phe) + AMP + diphosphate + H(+). This chain is Phenylalanine--tRNA ligase alpha subunit, found in Xanthomonas campestris pv. campestris (strain 8004).